The following is a 448-amino-acid chain: D-inositol 3-phosphate glycosyltransferase (448 aa).

Residues 1 to 21 are disordered; sequence MAEQHTGVGRQRGARPWPRPR. H29 is a 1D-myo-inositol 3-phosphate binding site. UDP-N-acetyl-alpha-D-glucosamine contacts are provided by residues 35-36 and G43; that span reads QP. 1D-myo-inositol 3-phosphate is bound by residues 40-45, K98, Y131, T155, and R175; that span reads DAGGMN. Residues R255, K260, and Q321 each contribute to the UDP-N-acetyl-alpha-D-glucosamine site. Mg(2+) contacts are provided by Y330, R331, and A333. UDP-N-acetyl-alpha-D-glucosamine-binding residues include E343 and E351. Position 357 (T357) interacts with Mg(2+).

It belongs to the glycosyltransferase group 1 family. MshA subfamily. In terms of assembly, homodimer.

The catalysed reaction is 1D-myo-inositol 3-phosphate + UDP-N-acetyl-alpha-D-glucosamine = 1D-myo-inositol 2-acetamido-2-deoxy-alpha-D-glucopyranoside 3-phosphate + UDP + H(+). In terms of biological role, catalyzes the transfer of a N-acetyl-glucosamine moiety to 1D-myo-inositol 3-phosphate to produce 1D-myo-inositol 2-acetamido-2-deoxy-glucopyranoside 3-phosphate in the mycothiol biosynthesis pathway. This Salinispora arenicola (strain CNS-205) protein is D-inositol 3-phosphate glycosyltransferase.